The chain runs to 693 residues: Elongation factor G (693 aa).

The region spanning 8–283 (PQQRNIGIMA…AVVEYLPSPV (276 aa)) is the tr-type G domain. GTP-binding positions include 17-24 (AHIDAGKT), 81-85 (DTPGH), and 135-138 (NKMD).

Belongs to the TRAFAC class translation factor GTPase superfamily. Classic translation factor GTPase family. EF-G/EF-2 subfamily.

The protein resides in the cytoplasm. In terms of biological role, catalyzes the GTP-dependent ribosomal translocation step during translation elongation. During this step, the ribosome changes from the pre-translocational (PRE) to the post-translocational (POST) state as the newly formed A-site-bound peptidyl-tRNA and P-site-bound deacylated tRNA move to the P and E sites, respectively. Catalyzes the coordinated movement of the two tRNA molecules, the mRNA and conformational changes in the ribosome. The protein is Elongation factor G of Oleidesulfovibrio alaskensis (strain ATCC BAA-1058 / DSM 17464 / G20) (Desulfovibrio alaskensis).